We begin with the raw amino-acid sequence, 374 residues long: S-adenosylmethionine:tRNA ribosyltransferase-isomerase (374 aa).

This sequence belongs to the QueA family. Monomer.

The protein localises to the cytoplasm. It carries out the reaction 7-aminomethyl-7-carbaguanosine(34) in tRNA + S-adenosyl-L-methionine = epoxyqueuosine(34) in tRNA + adenine + L-methionine + 2 H(+). The protein operates within tRNA modification; tRNA-queuosine biosynthesis. In terms of biological role, transfers and isomerizes the ribose moiety from AdoMet to the 7-aminomethyl group of 7-deazaguanine (preQ1-tRNA) to give epoxyqueuosine (oQ-tRNA). The polypeptide is S-adenosylmethionine:tRNA ribosyltransferase-isomerase (Sorangium cellulosum (strain So ce56) (Polyangium cellulosum (strain So ce56))).